A 489-amino-acid polypeptide reads, in one-letter code: MFS-type transporter MFS19 (489 aa).

Basic and acidic residues predominate over residues 1-12 (MAHSTAGDRDPE). Positions 1–42 (MAHSTAGDRDPEVGSEQHSSIAQLHTESMSDPWGDSNSPENP) are disordered. Over residues 16–41 (EQHSSIAQLHTESMSDPWGDSNSPEN) the composition is skewed to polar residues. The chain crosses the membrane as a helical span at residues 52–72 (FHVAIVSIFTLTANLAATMFA). N-linked (GlcNAc...) asparagine glycosylation is found at asparagine 83 and asparagine 86. 11 helical membrane passes run 91-111 (AMTV…LAPL), 127-147 (VYIA…FLVF), 149-169 (FLCG…VADI), 180-200 (ALFA…GGYV), 208-228 (WTFR…MFFM), 282-302 (PIVL…FLLF), 321-341 (GLAY…FSIL), 361-381 (LILM…YGWS), 388-408 (WIVP…VVIP), 425-445 (ALAA…LVAA), and 454-474 (GWGN…PWLF).

It belongs to the major facilitator superfamily.

The protein resides in the cell membrane. Functionally, MFS-type efflux pump involved in the modulation susceptibility to various compounds including cumyl hydroperoxide, potassium superoxide, many singlet oxygen-generating compounds (eosin Y, rose Bengal, hematoporphyrin, methylene blue, and cercosporin), and the cell wall biosynthesis inhibitor Congo red. Involved in oxidative stress tolerance, colonization, and lesion formation. The protein is MFS-type transporter MFS19 of Alternaria alternata (Alternaria rot fungus).